The primary structure comprises 338 residues: Cilia- and flagella-associated protein 36 (338 aa).

Residues 142–179 (ISDLEQEEMKLVSEALRLSKEEYEREQLRRSAKELNCT) are a coiled coil. Disordered stretches follow at residues 175–220 (ELNC…ESPY) and 281–314 (KKQE…KKSL). Polar residues predominate over residues 187–202 (KQSNGSERTPSNTELP). Positions 255-330 (NLSQAEKEQL…AEKLKEEVIL (76 aa)) form a coiled coil.

This sequence belongs to the CFAP36 family.

It is found in the nucleus. Its subcellular location is the cytoplasm. The protein resides in the cell projection. The protein localises to the cilium. It localises to the flagellum. The sequence is that of Cilia- and flagella-associated protein 36 from Xenopus laevis (African clawed frog).